We begin with the raw amino-acid sequence, 535 residues long: Methylmalonate-semialdehyde/malonate-semialdehyde dehydrogenase [acylating], mitochondrial (535 aa).

Residues 1 to 33 constitute a mitochondrion transit peptide; that stretch reads MAALLAAAAVRARILQVSSKVKSSPTWYSASSF. An N6-acetyllysine; alternate mark is found at Lys-47, Lys-52, Lys-55, and Lys-76. An N6-succinyllysine; alternate mark is found at Lys-47, Lys-52, Lys-55, and Lys-76. Lys-87 is subject to N6-acetyllysine. N6-acetyllysine; alternate is present on residues Lys-117 and Lys-129. N6-succinyllysine; alternate is present on residues Lys-117 and Lys-129. Residues Ala-183, Phe-185, Lys-209, Glu-212, Arg-213, and Ser-262 each contribute to the NAD(+) site. Position 262 is a phosphoserine (Ser-262). Lys-298 is subject to N6-acetyllysine. The active-site Nucleophile is Cys-317. An N6-acetyllysine mark is found at Lys-330 and Lys-331. 2 positions are modified to N6-acetyllysine; alternate: Lys-364 and Lys-376. 2 positions are modified to N6-succinyllysine; alternate: Lys-364 and Lys-376. A Phosphoserine modification is found at Ser-380. Position 391 is an N6-succinyllysine (Lys-391). Glu-417 is an NAD(+) binding site. Lys-500 is subject to N6-acetyllysine. The residue at position 517 (Lys-517) is an N6-succinyllysine.

The protein belongs to the aldehyde dehydrogenase family. Homotetramer.

The protein resides in the mitochondrion. It carries out the reaction 3-oxopropanoate + NAD(+) + CoA + H2O = hydrogencarbonate + acetyl-CoA + NADH + H(+). It catalyses the reaction 2-methyl-3-oxopropanoate + NAD(+) + CoA + H2O = propanoyl-CoA + hydrogencarbonate + NADH + H(+). The catalysed reaction is (R)-2-methyl-3-oxopropanoate + NAD(+) + CoA + H2O = propanoyl-CoA + hydrogencarbonate + NADH + H(+). The enzyme catalyses (S)-2-methyl-3-oxopropanoate + NAD(+) + CoA + H2O = propanoyl-CoA + hydrogencarbonate + NADH + H(+). In terms of biological role, malonate and methylmalonate semialdehyde dehydrogenase involved in the catabolism of valine, thymine, and compounds catabolized by way of beta-alanine, including uracil and cytidine. The sequence is that of Methylmalonate-semialdehyde/malonate-semialdehyde dehydrogenase [acylating], mitochondrial from Homo sapiens (Human).